A 183-amino-acid chain; its full sequence is Protein Syd (183 aa).

This sequence belongs to the Syd family.

Its subcellular location is the cell inner membrane. Interacts with the SecY protein in vivo. May bind preferentially to an uncomplexed state of SecY, thus functioning either as a chelating agent for excess SecY in the cell or as a regulatory factor that negatively controls the translocase function. The chain is Protein Syd from Yersinia pseudotuberculosis serotype O:1b (strain IP 31758).